Consider the following 397-residue polypeptide: Polyphosphatase (397 aa).

Positions 41, 127, and 148 each coordinate Mg(2+). Residues D41, D127, and H148 each coordinate Mn(2+). Residues H149, S286, and R381 each contribute to the ATP site.

The protein belongs to the PPase class C family. It depends on Mn(2+) as a cofactor. Requires Mg(2+) as cofactor.

It carries out the reaction [phosphate](n) + H2O = [phosphate](n-1) + phosphate + H(+). Polyphosphatase (polyPase) involved in the degradation of inorganic polyphosphates (polyP) that is able to degrade a range of chains from three to several hundreds of residues in a highly processive manner. Exclusively shows exopolyphosphatase activity, cleaving inside the polyP chain. The chain is Polyphosphatase from Saccharomyces cerevisiae (strain ATCC 204508 / S288c) (Baker's yeast).